Consider the following 134-residue polypeptide: MARVTVEDCVDKVENRFELVLLAGHRARQISQGAQITIDRDNDKNPVVALREIADETLSPDDLKEDLIHSLQKHVEVDEPEAAAPAQIASSSEEVAEGIADAAEEDMVAFDRMSEEELLAGIEGLVAPEKNDDF.

This sequence belongs to the RNA polymerase subunit omega family. As to quaternary structure, the RNAP catalytic core consists of 2 alpha, 1 beta, 1 beta' and 1 omega subunit. When a sigma factor is associated with the core the holoenzyme is formed, which can initiate transcription.

The enzyme catalyses RNA(n) + a ribonucleoside 5'-triphosphate = RNA(n+1) + diphosphate. Promotes RNA polymerase assembly. Latches the N- and C-terminal regions of the beta' subunit thereby facilitating its interaction with the beta and alpha subunits. The polypeptide is DNA-directed RNA polymerase subunit omega (Brucella anthropi (strain ATCC 49188 / DSM 6882 / CCUG 24695 / JCM 21032 / LMG 3331 / NBRC 15819 / NCTC 12168 / Alc 37) (Ochrobactrum anthropi)).